The chain runs to 360 residues: Alanine racemase (360 aa).

The active-site Proton acceptor; specific for D-alanine is the Lys33. Lys33 carries the post-translational modification N6-(pyridoxal phosphate)lysine. Residue Arg129 participates in substrate binding. Tyr253 serves as the catalytic Proton acceptor; specific for L-alanine. Met301 provides a ligand contact to substrate.

This sequence belongs to the alanine racemase family. It depends on pyridoxal 5'-phosphate as a cofactor.

It carries out the reaction L-alanine = D-alanine. It functions in the pathway amino-acid biosynthesis; D-alanine biosynthesis; D-alanine from L-alanine: step 1/1. Its function is as follows. Catalyzes the interconversion of L-alanine and D-alanine. May also act on other amino acids. The polypeptide is Alanine racemase (alr) (Xanthomonas campestris pv. campestris (strain 8004)).